The following is a 456-amino-acid chain: Putative alanyl-tRNA editing protein alaX (456 aa).

Zn(2+) contacts are provided by His125, His129, Cys240, and His244.

This sequence belongs to the class-II aminoacyl-tRNA synthetase family. Alax-L subfamily. It depends on Zn(2+) as a cofactor.

Functionally, may function in trans to edit the amino acid moiety from incorrectly charged tRNA(Ala). This Saccharomyces cerevisiae (strain ATCC 204508 / S288c) (Baker's yeast) protein is Putative alanyl-tRNA editing protein alaX.